Here is a 226-residue protein sequence, read N- to C-terminus: Flagellar L-ring protein (226 aa).

An N-terminal signal peptide occupies residues 1–15; sequence MKRLAVSILCLALAG. Cys-16 carries the N-palmitoyl cysteine lipid modification. Cys-16 is lipidated: S-diacylglycerol cysteine.

It belongs to the FlgH family. In terms of assembly, the basal body constitutes a major portion of the flagellar organelle and consists of four rings (L,P,S, and M) mounted on a central rod.

The protein localises to the cell outer membrane. It is found in the bacterial flagellum basal body. In terms of biological role, assembles around the rod to form the L-ring and probably protects the motor/basal body from shearing forces during rotation. In Geobacter metallireducens (strain ATCC 53774 / DSM 7210 / GS-15), this protein is Flagellar L-ring protein.